The primary structure comprises 478 residues: Proline--tRNA ligase (478 aa).

It belongs to the class-II aminoacyl-tRNA synthetase family. ProS type 3 subfamily. Homodimer.

The protein localises to the cytoplasm. The catalysed reaction is tRNA(Pro) + L-proline + ATP = L-prolyl-tRNA(Pro) + AMP + diphosphate. Catalyzes the attachment of proline to tRNA(Pro) in a two-step reaction: proline is first activated by ATP to form Pro-AMP and then transferred to the acceptor end of tRNA(Pro). The chain is Proline--tRNA ligase from Oceanobacillus iheyensis (strain DSM 14371 / CIP 107618 / JCM 11309 / KCTC 3954 / HTE831).